A 481-amino-acid polypeptide reads, in one-letter code: MATTDPAIAAPDDSQLEAGRENIRANVGDALEKPSSSTGTMVDEPTDPNVVDWDGPHDPEHPLNWSKTQKNLHLVIVSLFTLAANLAATMFAPGAEELATEFSITNSTVTAMTVSLYVLGFALGPLLLAPLSELYGRLVIYYGCNFVYVVFTIGCAFSTNVAMFLVFRIICGCAASGPMSIGGGTVADLFPQEERGKAMALFTVGPLLGPSGLIGVATVIFMRETNYMVLLQRKAQRARKETGNDKLVPKLTRNETPKQMLARAIVRPLKLLIFSPIVLLISLYTGILFGLIFLLFTTFPSVFQDVYGFSPGTAGLAYLGLGIGMILGLVLFSVLSDKMLKQKSGAARPEDRLILMKWLGPITPLGLFIYGWTAKYAVHWIVPIIGTFVVGFGSLFVVIPGQIYLVDAFGAEAAASAMAANLLVRSPFGAFLDLTASPLYVSLGLGWGNSVLGFICLLFTPVPWLFYTYGERMRTHFKVDL.

The span at 1–13 (MATTDPAIAAPDD) shows a compositional bias: low complexity. The tract at residues 1–58 (MATTDPAIAAPDDSQLEAGRENIRANVGDALEKPSSSTGTMVDEPTDPNVVDWDGPHD) is disordered. An N-linked (GlcNAc...) asparagine glycan is attached at asparagine 64. The helical transmembrane segment at 72–92 (LHLVIVSLFTLAANLAATMFA) threads the bilayer. Asparagine 106 carries an N-linked (GlcNAc...) asparagine glycan. The next 10 helical transmembrane spans lie at 111–131 (AMTVSLYVLGFALGPLLLAPL), 146–166 (FVYVVFTIGCAFSTNVAMFLV), 169–189 (IICGCAASGPMSIGGGTVADL), 201–221 (LFTVGPLLGPSGLIGVATVIF), 276–296 (PIVLLISLYTGILFGLIFLLF), 315–335 (GLAYLGLGIGMILGLVLFSVL), 353–373 (LILMKWLGPITPLGLFIYGWT), 380–400 (WIVPIIGTFVVGFGSLFVVIP), 403–423 (IYLVDAFGAEAAASAMAANLL), and 439–459 (LYVSLGLGWGNSVLGFICLLF).

The protein belongs to the major facilitator superfamily.

It is found in the cell membrane. Efflux pump that might be required for efficient secretion of equisetin or other secondary metabolies produced by the equisetin gene cluster. The polypeptide is MFS transporter eqxG (Fusarium heterosporum).